A 296-amino-acid polypeptide reads, in one-letter code: Regulatory protein PchR (296 aa).

Positions 201–296 (HAARDLLVGA…RYGISPSEIR (96 aa)) constitute an HTH araC/xylS-type domain. 2 consecutive DNA-binding regions (H-T-H motif) follow at residues 218–239 (DTLA…RKVF) and 266–288 (VSTV…RKRY).

Functionally, positive activator of the genes for pyochelin and ferripyochelin receptors. In Pseudomonas aeruginosa (strain ATCC 15692 / DSM 22644 / CIP 104116 / JCM 14847 / LMG 12228 / 1C / PRS 101 / PAO1), this protein is Regulatory protein PchR (pchR).